Reading from the N-terminus, the 467-residue chain is Cytochrome c-552 (467 aa).

The signal sequence occupies residues 1–27 (MVKKLTGKSFALSALVAASFVAAGAMA). His-87 lines the heme c pocket. Cys-115, Cys-118, and Lys-119 together coordinate heme. 6 residues coordinate heme c: Cys-153, Cys-156, His-157, Cys-195, Cys-198, and His-199. Residues Glu-201, Tyr-202, Lys-250, and Gln-252 each contribute to the Ca(2+) site. Residue Tyr-202 participates in substrate binding. Position 253 (His-253) interacts with substrate. Heme c is bound by residues His-264, Cys-271, Cys-274, His-275, His-290, Cys-303, Cys-306, His-307, and His-382.

It belongs to the cytochrome c-552 family. Ca(2+) is required as a cofactor. The cofactor is heme c.

It localises to the periplasm. It catalyses the reaction 6 Fe(III)-[cytochrome c] + NH4(+) + 2 H2O = 6 Fe(II)-[cytochrome c] + nitrite + 8 H(+). It functions in the pathway nitrogen metabolism; nitrate reduction (assimilation). Functionally, catalyzes the reduction of nitrite to ammonia, consuming six electrons in the process. This Shewanella amazonensis (strain ATCC BAA-1098 / SB2B) protein is Cytochrome c-552.